A 37-amino-acid polypeptide reads, in one-letter code: Unknown protein 25 (37 aa).

The sequence is that of Unknown protein 25 from Pseudotsuga menziesii (Douglas-fir).